A 364-amino-acid chain; its full sequence is Probable UDP-arabinopyranose mutase 1 (364 aa).

Positions aspartate 110 to aspartate 112 match the DXD motif motif. N-linked (Glc...) arginine glycosylation occurs at arginine 158.

Belongs to the RGP family. Homopentamer or homohexamer. Mn(2+) serves as cofactor. Mg(2+) is required as a cofactor. In terms of processing, reversibly glycosylated by UDP-glucose, UDP-xylose and UDP-galactose.

It localises to the secreted. It is found in the cell wall. Its subcellular location is the cell junction. The protein localises to the plasmodesma. The protein resides in the golgi apparatus. The enzyme catalyses UDP-beta-L-arabinofuranose = UDP-beta-L-arabinopyranose. Its function is as follows. Probable UDP-L-arabinose mutase involved in the biosynthesis of cell wall non-cellulosic polysaccharides. Was initially shown to possess an autoglycosylating activity which is dependent on the presence of UDP-glucose and manganese. The polypeptide is Probable UDP-arabinopyranose mutase 1 (Zea mays (Maize)).